Here is a 609-residue protein sequence, read N- to C-terminus: MSPPRDRVDAYYKDNFQFKNTRVVLNKEQLLIERPCMLLTVLFVMFLSLVGLLAIAGIRLHRAAVNTAKINNDLTTSIDITKSIEYQVKDVLTPLFKIIGDEVGLRTPQRFTDLTKFISDKIKFLNPDKEYDFRDINWCINPPERIKIDYDQYCAHTAAEDLITMLVNSSLTGTTVLRTSLVNLRRNCTGPTTTKGQFSNISLTLSGIYSGRGYNISSMITITGKGMYGSTYLVGKYNQRARRPSIVWQQDYRVFEVGIIRELGVGTPVFHMTNYLELPRQPELETCMLALGESKLAALCLADSPVALHYGRVGDDNKIRFVKLGVWASPADRDTLATLSAIDPTLDGLYITTHRGIIAAGTAIWAVPVTRTDDQVKMGKCRLEACRDRPPPFCNSTDWEPLEAGRIPAYGVLTIKLGLADEPKVDIISEFGPLITHDSGMDLYTSFDGTKYWLTTPPLQNSALGTVNTLVLEPSLKISPNILTLPIRSGGGDCYTPTYLSDRADDDVKLSSNLVILPSRDLQYVSATYDISRVEHAIVYHIYSTGRLSSYYYPFKLPIKGDPVSLQIECFPWDRKLWCHHFCSVIDSGTGEQVTHIGVVGIKITCNGK.

Residues 1 to 34 are Intravirion-facing; that stretch reads MSPPRDRVDAYYKDNFQFKNTRVVLNKEQLLIER. The helical; Signal-anchor for type II membrane protein transmembrane segment at 35-58 threads the bilayer; sequence PCMLLTVLFVMFLSLVGLLAIAGI. Residues 59–609 lie on the Virion surface side of the membrane; sequence RLHRAAVNTA…VGIKITCNGK (551 aa). Residues N168, N187, N200, N215, and N395 are each glycosylated (N-linked (GlcNAc...) asparagine; by host).

This sequence belongs to the paramyxoviruses hemagglutinin-neuraminidase family. Non-sialidase subfamily.

The protein localises to the virion membrane. The protein resides in the host membrane. Its function is as follows. Attaches the virus to cell receptors and thereby initiating infection. Binding of H protein to the receptor induces a conformational change that allows the F protein to trigger virion/cell membranes fusion. Down-regulates human MCP/CD46 cell surface expression. This Rinderpest virus (strain Kabete O) (RDV) protein is Hemagglutinin glycoprotein (H).